The sequence spans 175 residues: Large ribosomal subunit protein uL6 (175 aa).

Belongs to the universal ribosomal protein uL6 family. As to quaternary structure, part of the 50S ribosomal subunit.

Its function is as follows. This protein binds to the 23S rRNA, and is important in its secondary structure. It is located near the subunit interface in the base of the L7/L12 stalk, and near the tRNA binding site of the peptidyltransferase center. In Xanthomonas oryzae pv. oryzae (strain MAFF 311018), this protein is Large ribosomal subunit protein uL6.